A 270-amino-acid polypeptide reads, in one-letter code: Protein FAM110D (270 aa).

The segment covering 1–16 (MLLASPSTPSRGRTPS) has biased composition (low complexity). 3 disordered regions span residues 1–83 (MLLA…RPDS), 117–142 (RDVA…PQDA), and 186–244 (PQSW…QVSV). Over residues 68–78 (RPARRGSGRRL) the composition is skewed to basic residues.

This sequence belongs to the FAM110 family.

In Bos taurus (Bovine), this protein is Protein FAM110D (FAM110D).